The sequence spans 232 residues: Octanoyltransferase (232 aa).

In terms of domain architecture, BPL/LPL catalytic spans 43–231 (DQTPNYFLFV…HFTQLFDCTV (189 aa)). Residues 88-95 (RGGDITYH), 160-162 (ALG), and 173-175 (GFA) each bind substrate. Cys-191 (acyl-thioester intermediate) is an active-site residue.

Belongs to the LipB family.

The protein localises to the cytoplasm. It catalyses the reaction octanoyl-[ACP] + L-lysyl-[protein] = N(6)-octanoyl-L-lysyl-[protein] + holo-[ACP] + H(+). It participates in protein modification; protein lipoylation via endogenous pathway; protein N(6)-(lipoyl)lysine from octanoyl-[acyl-carrier-protein]: step 1/2. In terms of biological role, catalyzes the transfer of endogenously produced octanoic acid from octanoyl-acyl-carrier-protein onto the lipoyl domains of lipoate-dependent enzymes. Lipoyl-ACP can also act as a substrate although octanoyl-ACP is likely to be the physiological substrate. In Flavobacterium psychrophilum (strain ATCC 49511 / DSM 21280 / CIP 103535 / JIP02/86), this protein is Octanoyltransferase.